Consider the following 1062-residue polypeptide: MPHLPLASFRPPLRGLRPTRCFPRSHSLSTQSEPHGSPISRRNREAKQKRLREKQAALETGIAAKGKPPAESTKAWTPKEIVLYEIPTEHGEKKDVSRPLPPAYSPRYVEAAWYPWWVREGFFKPEYQTRLPQATGETFSMCIPPPNVTGSLHIGHALTVAIQDALVRWHRMRGDRVLWVPGSDHAGIATQAVVEKKLWKERGLRRRELSREDFLREVWKWKEEKGGEICQQLRVLGASLDWDRECFTMDAGSSVAVTEAFVRLYKAGLLYRSRQLVNWSCALRSAISDIEVESRPLSGRTELRLPGCPTPVSFGLLVSVAFPVDGEPDAEVVVGTTRPETLPGDVAVAVHPDDARYTHLHGRQLHHPLTGQLLPLITDCAVQPHLGTGAVKVTPAHSPADAELGARHGLSPLSVIAEDGTMTSLCGDWLQGLHRFVAREKIVSALRERGLFRGLQNHPMVLPICSRSGDVVEYLLKSQWFVRCQEMGEQAAKAVVSGALELSPSFHQKNWQHWFSHIGDWCVSRQLWWGHRIPAYLVVEERAKGNTEDCWVVGRTEAEAREVAAELTGRPGAELTLERDPDVLDTWFSSALFPFSALGWPQETPDLARFYPLSLLETGSDLLLFWVGRMVMLGTQLTGQLPFSKVLLHSMVRDRQGRKMSKSLGNVLDPRDIINGVELQVLQEKLRDGNLDPAELAIAAAAQKKDFPHGIPECGTDALRFTLCSHGVLGGDLHLSVSEVLSFRHFCNKIWNALRFILNALGEKFIPQPLEELCPTSPMDAWILSCLARTAQECERGFLTRELALVTHALHHFWLHNLCDVYLEAVKPVLSHSPRPPGPPQVLFSCADVGLRLLAPLMPFLAEELWQRLPLRPGNTTAPSICVAPYPSAHSLEHWHQPELERRFSRVQEAVQALRALRATYQLTKARPRVLLQTSEPGEQGLFEAFLGPLSTLGHCGAVGFLPPGAAAPSSWAQASLSDTAQVYMELQGLVDPQTHLPRLAARRQKLQKQLDSLLARTPSEGEAESQSQQRLSSLQLELSKLDKAASHLRQLMDASPSPGEL.

The transit peptide at 1–15 directs the protein to the mitochondrion; that stretch reads MPHLPLASFRPPLRG. The segment at 1–73 is disordered; that stretch reads MPHLPLASFR…AKGKPPAEST (73 aa). Residues 42-56 are compositionally biased toward basic and acidic residues; the sequence is RNREAKQKRLREKQA. The short motif at 146 to 156 is the 'HIGH' region element; it reads PNVTGSLHIGH. The 'KMSKS' region signature appears at 659-663; sequence KMSKS. Lys662 contacts ATP.

The protein belongs to the class-I aminoacyl-tRNA synthetase family.

The protein resides in the mitochondrion. The catalysed reaction is tRNA(Val) + L-valine + ATP = L-valyl-tRNA(Val) + AMP + diphosphate. Functionally, catalyzes the attachment of valine to tRNA(Val) in a two-step reaction: valine is first activated by ATP to form Val-AMP and then transferred to the acceptor end of tRNA(Val). This is Valine--tRNA ligase, mitochondrial (VARS2) from Sus scrofa (Pig).